The sequence spans 465 residues: Ribosome biogenesis protein YTM1 (465 aa).

Residues Ala18–Arg99 are ubiquitin-like (UBL) domain. WD repeat units follow at residues Leu111–Ser153, Gly160–Thr198, Gly205–Val242, Gly277–Thr317, Thr319–Ser358, Gly364–Asp404, and Gly427–Ala465. The tract at residues Lys235–Leu272 is disordered.

Belongs to the WD repeat WDR12/YTM1 family. In terms of assembly, component of the NOP7 complex, composed of ERB1, NOP7 and YTM1. The complex is held together by ERB1, which interacts with NOP7 via its N-terminal domain and with YTM1 via a high-affinity interaction between the seven-bladed beta-propeller domains of the 2 proteins. The NOP7 complex associates with the 66S pre-ribosome. Interacts (via UBL domain) with MDN1 (via VWFA/MIDAS domain).

The protein resides in the nucleus. Its subcellular location is the nucleolus. It localises to the nucleoplasm. Functionally, component of the NOP7 complex, which is required for maturation of the 25S and 5.8S ribosomal RNAs and formation of the 60S ribosome. The chain is Ribosome biogenesis protein YTM1 from Coccidioides immitis (strain RS) (Valley fever fungus).